Reading from the N-terminus, the 318-residue chain is Small ribosomal subunit protein mS26 (318 aa).

A disordered region spans residues 295 to 318; it reads IDSKLNPTSNGAGNNGNNNNTTNL. Residues 300–318 show a composition bias toward low complexity; sequence NPTSNGAGNNGNNNNTTNL.

This sequence belongs to the mitochondrion-specific ribosomal protein mS26 family. In terms of assembly, component of the mitochondrial small ribosomal subunit (mt-SSU). Mature yeast 74S mitochondrial ribosomes consist of a small (37S) and a large (54S) subunit. The 37S small subunit contains a 15S ribosomal RNA (15S mt-rRNA) and 34 different proteins. The 54S large subunit contains a 21S rRNA (21S mt-rRNA) and 46 different proteins.

It localises to the mitochondrion. In terms of biological role, component of the mitochondrial ribosome (mitoribosome), a dedicated translation machinery responsible for the synthesis of mitochondrial genome-encoded proteins, including at least some of the essential transmembrane subunits of the mitochondrial respiratory chain. The mitoribosomes are attached to the mitochondrial inner membrane and translation products are cotranslationally integrated into the membrane. The chain is Small ribosomal subunit protein mS26 (PET123) from Saccharomyces cerevisiae (strain ATCC 204508 / S288c) (Baker's yeast).